The chain runs to 78 residues: Consomatin Nc1 (78 aa).

A signal peptide spans 1 to 22; sequence MQTAYWVMVMVMVWITAPLSEG. Residues 23-59 constitute a propeptide that is removed on maturation; sequence GKPNDVIRGLVPDDLTPQLILRSLISRRRSDKDVGKR. Residue Glu61 is modified to 4-carboxyglutamate. An intrachain disulfide couples Cys62 to Cys67. Position 64 is a D-tryptophan (Trp64). The residue at position 70 (Pro70) is a 4-hydroxyproline. Residues 71–78 constitute a propeptide that is removed on maturation; it reads LSRRHDLG.

Belongs to the conotoxin C superfamily. Consomatin family. As to expression, expressed by the venom duct.

The protein resides in the secreted. In terms of biological role, moderately activates human somatostatin receptors (SSTR) with a preferential activation of SSTR1 and SSTR4. In vivo, does not cause behavioral changes in mice within a few minutes of intracranial injection, but causes a progressive loss of movement thereafter. Four to five hours after injection, mice recover, even with the highest dose tested. Shows antinociception and antihyperalgesia activities in two mouse models of acute pain, most probably by acting outside the central nervous system. This chain is Consomatin Nc1, found in Conus neocostatus (Cone snail).